We begin with the raw amino-acid sequence, 304 residues long: Carnitine monooxygenase reductase subunit (304 aa).

An FAD-binding FR-type domain is found at 1–93 (MEQLTPLIKR…SEPKNLFPLA (93 aa)). Positions 219 to 304 (FTVVLAKSNQ…AKGKKLVLDL (86 aa)) constitute a 2Fe-2S ferredoxin-type domain. The [2Fe-2S] cluster site is built by Cys-253, Cys-258, Cys-261, and Cys-291.

The protein belongs to the PDR/VanB family. CntB subfamily. In terms of assembly, composed of an oxygenase subunit and a reductase subunit. Requires FMN as cofactor. The cofactor is [2Fe-2S] cluster.

The catalysed reaction is (R)-carnitine + NADH + O2 + H(+) = (3R)-3-hydroxy-4-oxobutanoate + trimethylamine + NAD(+) + H2O. It catalyses the reaction (R)-carnitine + NADPH + O2 + H(+) = (3R)-3-hydroxy-4-oxobutanoate + trimethylamine + NADP(+) + H2O. Its pathway is amine and polyamine metabolism; carnitine metabolism. Inhibited by EDTA. Functionally, converts carnitine to trimethylamine and malic semialdehyde. Acts on both enantiomers. In Acinetobacter pittii (strain PHEA-2), this protein is Carnitine monooxygenase reductase subunit.